Reading from the N-terminus, the 2313-residue chain is Histone-lysine N-methyltransferase Set2 (2313 aa).

Disordered stretches follow at residues 1-115, 179-442, 550-858, 883-1106, 1118-1150, and 1163-1251; these read MEES…ASTS, AVGG…EETF, EPPL…LKAK, RLDE…KKAL, ETESSESTSSGSKMSRWDVQTSPELEAANPFGD, and KRDK…SQGR. The segment at residues 17-29 is a DNA-binding region (a.T hook 1); the sequence is GRGRGRPPKVALS. Residues 73–82 are compositionally biased toward basic and acidic residues; sequence IKFDVRDLLN. Low complexity predominate over residues 101–115; sequence STGHSQSGTTAASTS. Positions 197-209 form a DNA-binding region, a.T hook 2; sequence PRKRGRPRKSQLA. Positions 221–241 are enriched in low complexity; it reads SCSDSDTNSTSTTTSNMSSDS. The span at 252-265 shows a compositional bias: basic residues; the sequence is PKSKLRVSLKRLKL. Positions 266–288 are enriched in low complexity; that stretch reads GGRLESSDSGNSPSSSSPEVEPP. Basic and acidic residues predominate over residues 330–345; sequence ESPKGEEEQEEGRPVE. Acidic residues-rich tracts occupy residues 347-356, 365-375, and 388-398; these read EPQDLIDIDM, PDPEEDLDEIM, and ADDEAEEEEDA. Position 404 is a phosphothreonine (Thr404). The span at 412–433 shows a compositional bias: low complexity; that stretch reads ADSCSSAPRRSRRSAPLSGSSR. Basic and acidic residues predominate over residues 552 to 563; sequence PLKDESDPKQTE. The span at 659 to 671 shows a compositional bias: acidic residues; sequence EDYESNQEQVAED. Residues 676 to 685 show a composition bias toward polar residues; that stretch reads CNNQKGQKQT. Basic and acidic residues-rich tracts occupy residues 689–708, 719–732, 740–749, and 758–782; these read EMKEPEKPVAETVSKKEKAM, VDKKVRAGEMEKKV, VPEKKMDSKK, and KQKESGKSAKEAILKKETEKEKSSA. Residues Ser786 and Ser788 each carry the phosphoserine modification. 3 stretches are compositionally biased toward polar residues: residues 800-833, 918-928, and 938-955; these read AQWSPQLQTLPKSSTKPPQESAPSVISKTTSNQP, KSLSGKTSLRR, and LERNSSPSSDSAQANTSA. Residues 959–969 show a composition bias toward basic residues; sequence KPSKVKKKINP. Low complexity predominate over residues 997 to 1010; sequence SSPVSTSSDSSSKR. Over residues 1016–1039 the composition is skewed to basic and acidic residues; the sequence is TTSDLDGGSKLDQRRYTICEDRQP. Composition is skewed to low complexity over residues 1085–1097 and 1118–1127; these read SRQNSLDSSSSAS and ETESSESTSS. Over residues 1163 to 1183 the composition is skewed to basic and acidic residues; that stretch reads KRDKVDEDQRKEGQDEVKREA. The segment covering 1199–1213 has biased composition (low complexity); the sequence is TPATTPTPSPTQSNP. The region spanning 1307 to 1360 is the AWS domain; the sequence is NAEMQCDCFLTGDEEAQGHLSCGAGCINRMLMIECGPLCSNGARCTNKRFQQHQ. Positions 1312, 1314, 1328, 1332, 1341, 1345, and 1351 each coordinate Zn(2+). One can recognise an SET domain in the interval 1362-1479; sequence WPCRVFRTEK…PGEEITFDYQ (118 aa). Residues 1415–1417 and 1440–1441 contribute to the S-adenosyl-L-methionine site; these read HYY and NH. Cys1443 provides a ligand contact to Zn(2+). One can recognise a Post-SET domain in the interval 1486–1502; that stretch reads DAQRCYCEAANCRGWIG. Position 1488 (Gln1488) interacts with S-adenosyl-L-methionine. Position 1490 (Cys1490) interacts with Zn(2+). Position 1491 (Tyr1491) interacts with S-adenosyl-L-methionine. Zn(2+)-binding residues include Cys1492 and Cys1497. 2 disordered regions span residues 1501–1598 and 1763–1860; these read IGGE…KPKV and MKEH…RRTL. Residues 1505-1534 show a composition bias toward acidic residues; the sequence is PDSDEGEQLDEESDSDAEMDEEELEAEPEE. Residues 1539–1551 are compositionally biased toward basic residues; it reads KSAKAKAKSKLKA. Composition is skewed to basic and acidic residues over residues 1564 to 1574, 1763 to 1774, and 1784 to 1806; these read QTKPKDREYKA, MKEHEREADRQQ, and EDQRERESSNDRFRQDRFRRDTT. The span at 1817–1832 shows a compositional bias: polar residues; the sequence is SGNNTICTITTQQKGS. Residues 1840–1860 are compositionally biased toward basic and acidic residues; sequence TRNDNRRRSDIGPPSEQRRTL. The region spanning 1963–1996 is the WW domain; sequence DPLPPAWNWQVTSDGDIYYYNLRERISQWEPPSP. 2 positions are modified to phosphoserine: Ser2130 and Ser2131. Residues 2177-2218 are disordered; the sequence is LGTVGKRKLPMPPSVTVKKHRQEQRSKKVKSSQSPLTATSAR. Basic residues predominate over residues 2193 to 2206; sequence VKKHRQEQRSKKVK. Residues 2207–2216 are compositionally biased toward polar residues; it reads SSQSPLTATS.

It belongs to the class V-like SAM-binding methyltransferase superfamily. Histone-lysine methyltransferase family. SET2 subfamily. In terms of assembly, interacts with (phosphorylated) Polr2A.

It localises to the nucleus. Its subcellular location is the chromosome. It carries out the reaction L-lysyl(36)-[histone H3] + 3 S-adenosyl-L-methionine = N(6),N(6),N(6)-trimethyl-L-lysyl(36)-[histone H3] + 3 S-adenosyl-L-homocysteine + 3 H(+). Histone methyltransferase that specifically trimethylates 'Lys-36' of histone H3 (H3K36me3). Represents the main enzyme generating H3K36me3, a specific tag for epigenetic transcriptional activation. Involved in dosage compensation in males (X chromosome dosage compensation) by mediating formation of H3K36me3, a mark recognized by msl-3 component of the MSL complex. In addition to its role in dosage compensation in males, promotes germline stem cell differentiation in females: catalyzes formation of H3K36me3, promoting recruitment of msl-3 and subsequent recruitment of the ATAC complex, leading to transcription of genes, such as RpS19b. This chain is Histone-lysine N-methyltransferase Set2, found in Drosophila melanogaster (Fruit fly).